The primary structure comprises 159 residues: Ribosomal RNA large subunit methyltransferase H (159 aa).

S-adenosyl-L-methionine is bound by residues Leu-76, Gly-108, and 127 to 132 (FSRMTF).

Belongs to the RNA methyltransferase RlmH family. Homodimer.

Its subcellular location is the cytoplasm. It carries out the reaction pseudouridine(1915) in 23S rRNA + S-adenosyl-L-methionine = N(3)-methylpseudouridine(1915) in 23S rRNA + S-adenosyl-L-homocysteine + H(+). Specifically methylates the pseudouridine at position 1915 (m3Psi1915) in 23S rRNA. The chain is Ribosomal RNA large subunit methyltransferase H from Bacillus pumilus (strain SAFR-032).